Reading from the N-terminus, the 348-residue chain is High mobility group protein 20A (348 aa).

Disordered stretches follow at residues 1 to 114 (MENL…YVRF) and 181 to 213 (SRKA…DTKE). Polar residues-rich tracts occupy residues 34-47 (SESS…QPVN) and 56-71 (SQVQ…TAEN). The span at 72–82 (TEQKPEEEQQR) shows a compositional bias: basic and acidic residues. Residues 83–97 (TKRGGWAKGRKRKKP) show a composition bias toward basic residues. The HMG box DNA-binding region spans 104-172 (PKSPLTGYVR…RYMRELEQYQ (69 aa)). Basic and acidic residues predominate over residues 183–213 (KAQDRQKGKLHRQDGARQPVHDHEKEADTKE). The stretch at 230 to 274 (SKAREAELRQLRKSNMEFEERNAALQKHVESMRTAVEKLEVDVIQ) forms a coiled coil.

It is found in the nucleus. Plays a role in neuronal differentiation. This is High mobility group protein 20A (HMG20A) from Gallus gallus (Chicken).